We begin with the raw amino-acid sequence, 99 residues long: NADH-quinone oxidoreductase subunit K (99 aa).

3 helical membrane passes run 3–23 (PANY…GVLV), 28–48 (IVVF…LVTF), and 59–79 (IMAF…LAII).

It belongs to the complex I subunit 4L family. As to quaternary structure, NDH-1 is composed of 14 different subunits. Subunits NuoA, H, J, K, L, M, N constitute the membrane sector of the complex.

The protein localises to the cell membrane. It carries out the reaction a quinone + NADH + 5 H(+)(in) = a quinol + NAD(+) + 4 H(+)(out). Its function is as follows. NDH-1 shuttles electrons from NADH, via FMN and iron-sulfur (Fe-S) centers, to quinones in the respiratory chain. The immediate electron acceptor for the enzyme in this species is believed to be a menaquinone. Couples the redox reaction to proton translocation (for every two electrons transferred, four hydrogen ions are translocated across the cytoplasmic membrane), and thus conserves the redox energy in a proton gradient. The sequence is that of NADH-quinone oxidoreductase subunit K from Frankia casuarinae (strain DSM 45818 / CECT 9043 / HFP020203 / CcI3).